The primary structure comprises 179 residues: uncharacterized protein (179 aa).

This is an uncharacterized protein from Mushroom bacilliform virus (isolate Australia/AUS LF-1) (MBV).